The chain runs to 167 residues: UPF0179 protein Pars_2336 (167 aa).

It belongs to the UPF0179 family.

The protein is UPF0179 protein Pars_2336 of Pyrobaculum arsenaticum (strain DSM 13514 / JCM 11321 / PZ6).